The chain runs to 362 residues: Serine/threonine-protein kinase SRK2E (362 aa).

Residues Ser7, Ser18, Ser29, and Ser43 each carry the phosphoserine; by autocatalysis modification. One can recognise a Protein kinase domain in the interval 21 to 277 (YELVKDIGSG…IPEIRNHEWF (257 aa)). An ATP-binding site is contributed by 27-35 (IGSGNFGVA). Lys50 contributes to the ATP binding site. The Proton acceptor role is filled by Asp140. The interval 160–186 (DFGYSKSSVLHSQPKSTVGTPAYIAPE) is activation loop. A Phosphoserine modification is found at Ser175. Residues 283-318 (ADLMNDNTMTTQFDESDQPGQSIEEIMQIIAEATVP) are domain I; osmotic stress response, required for the kinase activity. The tract at residues 319–362 (PAGTQNLNHYLTGSLDIDDDMEEDLESDLDDLDIDSSGEIVYAM) is domain II; ABA response and ABI1 binding.

The protein belongs to the protein kinase superfamily. Ser/Thr protein kinase family. Interacts with ABI1, PP2CA and SLAC1. Interacts with B'ALPHA, B'BETA, B'DELTA, PP2AA2, PP2AA3, PP2A1 and PP2A2. Associates with MAPKKK18 within the nucleus. Interacts with I-2, TOPP1 and TOPP2. Interacts with ABI2. Autophosphorylation on residues Ser-7, Ser-18, Ser-29, Ser-43, Ser-175 and/or Thr-176. Only the phosphorylation of Ser-175 is crucial for the kinase activity. The phosphorylation of Ser-43 may repress the ABA signaling pathway in absence of ABA. Expressed in seedlings, leaves, flowers, stems, and roots, but restricted to guard cells and vascular tissue.

The protein localises to the nucleus. It catalyses the reaction L-seryl-[protein] + ATP = O-phospho-L-seryl-[protein] + ADP + H(+). It carries out the reaction L-threonyl-[protein] + ATP = O-phospho-L-threonyl-[protein] + ADP + H(+). With respect to regulation, kinase activity enhanced by ABA and low humidity. Repressed by PP2CA independently of its phosphatase activity. Probably inactivated by ABI1. Repressed by TOPP1. Negatively regulated by ABI2. Activator of the abscisic acid (ABA) signaling pathway that regulates numerous ABA responses, such as stomata closure in response to drought, darkness, high CO(2), plant pathogens, or decreases in atmospheric relative humidity (RH). Involved in the resistance to drought by avoiding water loss. Required for the stomata closure mediated by pathogen-associated molecular pattern (PAMPs) (e.g. flg22 and LPS) of pathogenic bacteria such as P.syringae pv. tomato (Pst) and E.coli O157:H7. As a plant defense process, stomata are closed transiently in order to limit invaders, but actively reopened by bacteria after a few hours; virulent strains (e.g. Pst DC3000) are more efficient than avirulent strains (e.g. Pst DC3000 AvrRpt2) in reopening stomata. Mediates the phosphorylation and activation of the S-type anion efflux channel SLAC1, and thus promotes stomata closure. Essential for stomatal closure in response to reactive oxygen species (ROS). Promotes MAPKKK18 activity upon abscisic acid (ABA) treatment. The protein is Serine/threonine-protein kinase SRK2E of Arabidopsis thaliana (Mouse-ear cress).